The chain runs to 283 residues: Phosphatidylglycerol--prolipoprotein diacylglyceryl transferase (283 aa).

4 helical membrane-spanning segments follow: residues 19-39 (IGPI…LIGV), 59-79 (LSIW…VLFQ), 90-110 (IIAI…GTLA), and 120-140 (VPFW…QAIG). Arg141 lines the a 1,2-diacyl-sn-glycero-3-phospho-(1'-sn-glycerol) pocket. 3 helical membrane passes run 181 to 201 (TFLY…TLFF), 212 to 232 (VGTL…WIEG), and 245 to 265 (IAQV…AWLY).

The protein belongs to the Lgt family.

It is found in the cell inner membrane. It catalyses the reaction L-cysteinyl-[prolipoprotein] + a 1,2-diacyl-sn-glycero-3-phospho-(1'-sn-glycerol) = an S-1,2-diacyl-sn-glyceryl-L-cysteinyl-[prolipoprotein] + sn-glycerol 1-phosphate + H(+). The protein operates within protein modification; lipoprotein biosynthesis (diacylglyceryl transfer). Its function is as follows. Catalyzes the transfer of the diacylglyceryl group from phosphatidylglycerol to the sulfhydryl group of the N-terminal cysteine of a prolipoprotein, the first step in the formation of mature lipoproteins. The polypeptide is Phosphatidylglycerol--prolipoprotein diacylglyceryl transferase (Nostoc sp. (strain PCC 7120 / SAG 25.82 / UTEX 2576)).